The following is a 310-amino-acid chain: ADP-L-glycero-D-manno-heptose-6-epimerase (310 aa).

NADP(+) is bound by residues 10–11, 31–32, Lys38, Lys53, 75–79, and Asn92; these read FI, DN, and EGACS. The active-site Proton acceptor is the Tyr140. Lys144 lines the NADP(+) pocket. Substrate is bound at residue Asn169. NADP(+) is bound by residues Val170 and Lys178. Residue Lys178 is the Proton acceptor of the active site. Residues Ser180, His187, 201–204, Arg209, and Tyr272 contribute to the substrate site; that span reads FEGS.

Belongs to the NAD(P)-dependent epimerase/dehydratase family. HldD subfamily. As to quaternary structure, homopentamer. It depends on NADP(+) as a cofactor.

The catalysed reaction is ADP-D-glycero-beta-D-manno-heptose = ADP-L-glycero-beta-D-manno-heptose. It participates in nucleotide-sugar biosynthesis; ADP-L-glycero-beta-D-manno-heptose biosynthesis; ADP-L-glycero-beta-D-manno-heptose from D-glycero-beta-D-manno-heptose 7-phosphate: step 4/4. In terms of biological role, catalyzes the interconversion between ADP-D-glycero-beta-D-manno-heptose and ADP-L-glycero-beta-D-manno-heptose via an epimerization at carbon 6 of the heptose. In Citrobacter koseri (strain ATCC BAA-895 / CDC 4225-83 / SGSC4696), this protein is ADP-L-glycero-D-manno-heptose-6-epimerase.